The following is a 266-amino-acid chain: MASATLPMDYKTPFGYAYKLYVEGKDEHSLYILDNYLKNANCSENTYEQALILCLTIMCEQRRSWTEMEEKLLHNYQGKIPDSIVVNWIITYLENSEFTKENYAQMINSLYRYQDAILKSELKDSILPKLVNCACSVQLTEPLKAILANSRGELENSLLLRIQAQEEELKMNLERSKTPDPSEDEGEFALTLKLQFSKVSRLINQGLTPLLSRLQLIDKNIKIVGAIFGIILLLFRLKKYISHSKKSAFSPQRWKFLLDQFLLAIS.

A Phosphoserine modification is found at Ser176. A Phosphothreonine modification is found at Thr178.

This is an uncharacterized protein from Schizosaccharomyces pombe (strain 972 / ATCC 24843) (Fission yeast).